The chain runs to 94 residues: MDRSLQVYICMYPYLDGSKQYRFDELISFYRPCPKSLDNIKSHYRQIHHQIRRRTHQHHQIRRRTHQHHHRSNCSRQRQCLVRHSCGRQMRVLA.

Repeats lie at residues 48–57 (HHQIRRRTHQ) and 58–67 (HHQIRRRTHQ).

Its function is as follows. Involved in ammonia regulation of the GAP1 permease. This Saccharomyces cerevisiae (strain ATCC 204508 / S288c) (Baker's yeast) protein is Ammonia regulation of amino acid uptake protein (AUA1).